Consider the following 135-residue polypeptide: Retinol-binding protein 1 (135 aa).

The segment at 22–32 (RALDVNVALRK) is important for interaction with STRA6. Residues Lys41, Met63, and Gln109 each contribute to the all-trans-retinol site.

Belongs to the calycin superfamily. Fatty-acid binding protein (FABP) family. As to quaternary structure, interacts (only as retinol-free apoprotein) with STRA6.

It localises to the cytoplasm. The protein resides in the lipid droplet. In terms of biological role, cytoplasmic retinol-binding protein. Accepts retinol from the transport protein STRA6, and thereby contributes to retinol uptake, storage and retinoid homeostasis. In Mus musculus (Mouse), this protein is Retinol-binding protein 1 (Rbp1).